The following is a 216-amino-acid chain: CASP-like protein 2U1 (216 aa).

Residues 1–30 (MKQDTEMGEATNGYIGTPGTVPVSHAGNDS) are disordered. At 1–37 (MKQDTEMGEATNGYIGTPGTVPVSHAGNDSGMRRMRT) the chain is on the cytoplasmic side. Residues 38-58 (ASILMRLTAMALCVTALVTMV) traverse the membrane as a helical segment. Residues 59–86 (TDKQTHYFNFASTTIVKTAEYTNVLALK) are Extracellular-facing. The chain crosses the membrane as a helical span at residues 87–107 (VFVYTNGVIAGYSLLQALWTI). At 108–128 (VAKSSYSTSKARLWTTFFLDQ) the chain is on the cytoplasmic side. A helical transmembrane segment spans residues 129–148 (FIVYVLIGVTGAATEVAYIA). At 149–170 (EKGESDVAWPKQCNNFGRFCSQ) the chain is on the extracellular side. The chain crosses the membrane as a helical span at residues 171–191 (VGASVIVCFVAILTLVFLAVL). Over 192 to 216 (SAKQLFIHERPSRTTRKDGYYTSNQ) the chain is Cytoplasmic.

Belongs to the Casparian strip membrane proteins (CASP) family. Homodimer and heterodimers.

Its subcellular location is the cell membrane. This chain is CASP-like protein 2U1, found in Marchantia polymorpha (Common liverwort).